A 366-amino-acid chain; its full sequence is Uroporphyrinogen decarboxylase (366 aa).

Substrate contacts are provided by residues 28–32 (RQAGR), aspartate 78, tyrosine 160, threonine 215, and histidine 333.

This sequence belongs to the uroporphyrinogen decarboxylase family. Homodimer.

The protein resides in the cytoplasm. The enzyme catalyses uroporphyrinogen III + 4 H(+) = coproporphyrinogen III + 4 CO2. The protein operates within porphyrin-containing compound metabolism; protoporphyrin-IX biosynthesis; coproporphyrinogen-III from 5-aminolevulinate: step 4/4. In terms of biological role, catalyzes the decarboxylation of four acetate groups of uroporphyrinogen-III to yield coproporphyrinogen-III. The chain is Uroporphyrinogen decarboxylase from Paraburkholderia phytofirmans (strain DSM 17436 / LMG 22146 / PsJN) (Burkholderia phytofirmans).